The chain runs to 299 residues: Pectin lyase (299 aa).

The N-terminal stretch at 1 to 18 is a signal peptide; it reads MKFSTFVSLGLTAITALA. Low complexity-rich tracts occupy residues 82–91 and 232–246; these read RSAATSPSSD and SASAQATSTTTTTRT. Disordered regions lie at residues 82–105 and 227–246; these read RSAATSPSSDRTARSCLRTSPSPS and SRGRPSASAQATSTTTTTRT.

The protein belongs to the polysaccharide lyase 1 family.

It is found in the secreted. It catalyses the reaction Eliminative cleavage of (1-&gt;4)-alpha-D-galacturonan methyl ester to give oligosaccharides with 4-deoxy-6-O-methyl-alpha-D-galact-4-enuronosyl groups at their non-reducing ends.. The sequence is that of Pectin lyase (PELA) from Peyronellaea pinodes (Pea foot rot fungus).